The following is a 198-amino-acid chain: RxLR effector protein Htp1 (198 aa).

The first 23 residues, 1 to 23 (MRIHHPLTLAALCVVLHESLGAA), serve as a signal peptide directing secretion. The RxLR signature appears at 46 to 49 (RHLR). Disordered regions lie at residues 48-101 (LRSD…TPMK) and 115-198 (TKNA…PTFD). Asparagine 70 is a glycosylation site (N-linked (GlcNAc...) asparagine). Residues 70-91 (NNSQEQATTGNSVETNQVPSTE) are compositionally biased toward polar residues. The span at 126–137 (DDDDSDFSDDDV) shows a compositional bias: acidic residues. Over residues 173–191 (APTNAPTGTDAPTDAPTDA) the composition is skewed to low complexity.

It belongs to the RxLR effector family. Interacts with the effector Htp3 within the host cells.

It localises to the secreted. Its subcellular location is the host cell. Functionally, effector involved in the disease saprolegniosis in salmonids and other freshwater fish, resulting in considerable economic losses in aquaculture. Within the host fish cells, Htp1 is involved in the uptake of the S.parasitica effector Htp3 at a neutral pH (pH 7.5) and its release from vesicles into host cytosol where it degrades nucleic acids. The sequence is that of RxLR effector protein Htp1 from Saprolegnia parasitica (strain CBS 223.65).